We begin with the raw amino-acid sequence, 265 residues long: Tryptophan synthase alpha chain (265 aa).

Active-site proton acceptor residues include E49 and D60.

The protein belongs to the TrpA family. Tetramer of two alpha and two beta chains.

The enzyme catalyses (1S,2R)-1-C-(indol-3-yl)glycerol 3-phosphate + L-serine = D-glyceraldehyde 3-phosphate + L-tryptophan + H2O. The protein operates within amino-acid biosynthesis; L-tryptophan biosynthesis; L-tryptophan from chorismate: step 5/5. Functionally, the alpha subunit is responsible for the aldol cleavage of indoleglycerol phosphate to indole and glyceraldehyde 3-phosphate. The chain is Tryptophan synthase alpha chain from Cupriavidus taiwanensis (strain DSM 17343 / BCRC 17206 / CCUG 44338 / CIP 107171 / LMG 19424 / R1) (Ralstonia taiwanensis (strain LMG 19424)).